The sequence spans 107 residues: Serine-rich and transmembrane domain-containing protein 1 (107 aa).

A helical membrane pass occupies residues 43-63 (IYVSIFLSLLAFLLLLLIIAL).

The protein localises to the membrane. The chain is Serine-rich and transmembrane domain-containing protein 1 (SERTM1) from Homo sapiens (Human).